A 337-amino-acid chain; its full sequence is Cobalt-precorrin-5B C(1)-methyltransferase (337 aa).

Belongs to the CbiD family.

It carries out the reaction Co-precorrin-5B + S-adenosyl-L-methionine = Co-precorrin-6A + S-adenosyl-L-homocysteine. It participates in cofactor biosynthesis; adenosylcobalamin biosynthesis; cob(II)yrinate a,c-diamide from sirohydrochlorin (anaerobic route): step 6/10. Functionally, catalyzes the methylation of C-1 in cobalt-precorrin-5B to form cobalt-precorrin-6A. In Methanoculleus marisnigri (strain ATCC 35101 / DSM 1498 / JR1), this protein is Cobalt-precorrin-5B C(1)-methyltransferase.